The primary structure comprises 465 residues: Siroheme synthase (465 aa).

Residues 1-203 (MDFLPLFHSL…GRPAEAERLL (203 aa)) form a precorrin-2 dehydrogenase /sirohydrochlorin ferrochelatase region. NAD(+) contacts are provided by residues 22–23 (EV) and 43–44 (PQ). Ser128 carries the phosphoserine modification. The interval 217–465 (GEVYLVGAGP…AWFEGAREDA (249 aa)) is uroporphyrinogen-III C-methyltransferase. S-adenosyl-L-methionine is bound at residue Pro226. Asp249 functions as the Proton acceptor in the catalytic mechanism. Catalysis depends on Lys271, which acts as the Proton donor. S-adenosyl-L-methionine contacts are provided by residues 302–304 (GGD), Ile307, 332–333 (TA), Met384, and Gly413.

This sequence in the N-terminal section; belongs to the precorrin-2 dehydrogenase / sirohydrochlorin ferrochelatase family. In the C-terminal section; belongs to the precorrin methyltransferase family.

It catalyses the reaction uroporphyrinogen III + 2 S-adenosyl-L-methionine = precorrin-2 + 2 S-adenosyl-L-homocysteine + H(+). The catalysed reaction is precorrin-2 + NAD(+) = sirohydrochlorin + NADH + 2 H(+). The enzyme catalyses siroheme + 2 H(+) = sirohydrochlorin + Fe(2+). Its pathway is cofactor biosynthesis; adenosylcobalamin biosynthesis; precorrin-2 from uroporphyrinogen III: step 1/1. It participates in cofactor biosynthesis; adenosylcobalamin biosynthesis; sirohydrochlorin from precorrin-2: step 1/1. The protein operates within porphyrin-containing compound metabolism; siroheme biosynthesis; precorrin-2 from uroporphyrinogen III: step 1/1. It functions in the pathway porphyrin-containing compound metabolism; siroheme biosynthesis; siroheme from sirohydrochlorin: step 1/1. Its pathway is porphyrin-containing compound metabolism; siroheme biosynthesis; sirohydrochlorin from precorrin-2: step 1/1. In terms of biological role, multifunctional enzyme that catalyzes the SAM-dependent methylations of uroporphyrinogen III at position C-2 and C-7 to form precorrin-2 via precorrin-1. Then it catalyzes the NAD-dependent ring dehydrogenation of precorrin-2 to yield sirohydrochlorin. Finally, it catalyzes the ferrochelation of sirohydrochlorin to yield siroheme. The protein is Siroheme synthase of Pseudomonas aeruginosa (strain ATCC 15692 / DSM 22644 / CIP 104116 / JCM 14847 / LMG 12228 / 1C / PRS 101 / PAO1).